Reading from the N-terminus, the 260-residue chain is Triosephosphate isomerase (260 aa).

Residue 11-13 (NWK) participates in substrate binding. Catalysis depends on His-103, which acts as the Electrophile. The active-site Proton acceptor is Glu-175. Residues Gly-181, Ser-220, and 241–242 (GG) contribute to the substrate site.

It belongs to the triosephosphate isomerase family. In terms of assembly, homodimer.

It is found in the cytoplasm. It carries out the reaction D-glyceraldehyde 3-phosphate = dihydroxyacetone phosphate. It functions in the pathway carbohydrate biosynthesis; gluconeogenesis. Its pathway is carbohydrate degradation; glycolysis; D-glyceraldehyde 3-phosphate from glycerone phosphate: step 1/1. Its function is as follows. Involved in the gluconeogenesis. Catalyzes stereospecifically the conversion of dihydroxyacetone phosphate (DHAP) to D-glyceraldehyde-3-phosphate (G3P). The chain is Triosephosphate isomerase from Shewanella halifaxensis (strain HAW-EB4).